A 369-amino-acid chain; its full sequence is Flagellar P-ring protein (369 aa).

A signal peptide spans 1-23 (MRIASFFTVLLTLLTLNIAPASA).

The protein belongs to the FlgI family. The basal body constitutes a major portion of the flagellar organelle and consists of four rings (L,P,S, and M) mounted on a central rod.

It is found in the periplasm. The protein localises to the bacterial flagellum basal body. Functionally, assembles around the rod to form the L-ring and probably protects the motor/basal body from shearing forces during rotation. This Pectobacterium carotovorum subsp. carotovorum (strain PC1) protein is Flagellar P-ring protein.